We begin with the raw amino-acid sequence, 643 residues long: DNA-directed RNA polymerase subunit beta' (643 aa).

Cys-83, Cys-85, Cys-98, and Cys-101 together coordinate Zn(2+). Mg(2+) is bound by residues Asp-480, Asp-482, and Asp-484.

This sequence belongs to the RNA polymerase beta' chain family. RpoC1 subfamily. In terms of assembly, in plastids the minimal PEP RNA polymerase catalytic core is composed of four subunits: alpha, beta, beta', and beta''. When a (nuclear-encoded) sigma factor is associated with the core the holoenzyme is formed, which can initiate transcription. Mg(2+) serves as cofactor. Zn(2+) is required as a cofactor.

It is found in the plastid. The protein localises to the organellar chromatophore. It catalyses the reaction RNA(n) + a ribonucleoside 5'-triphosphate = RNA(n+1) + diphosphate. In terms of biological role, DNA-dependent RNA polymerase catalyzes the transcription of DNA into RNA using the four ribonucleoside triphosphates as substrates. The sequence is that of DNA-directed RNA polymerase subunit beta' from Paulinella chromatophora.